The following is a 78-amino-acid chain: Large ribosomal subunit protein bL28 (78 aa).

It belongs to the bacterial ribosomal protein bL28 family.

This Xylella fastidiosa (strain 9a5c) protein is Large ribosomal subunit protein bL28 (rpmB).